The sequence spans 226 residues: NADH-quinone oxidoreductase subunit C (226 aa).

A disordered region spans residues 1–21 (MTEPTGDQTPEIIGVRRGMFG).

The protein belongs to the complex I 30 kDa subunit family. As to quaternary structure, NDH-1 is composed of 14 different subunits. Subunits NuoB, C, D, E, F, and G constitute the peripheral sector of the complex.

It is found in the cell membrane. The enzyme catalyses a quinone + NADH + 5 H(+)(in) = a quinol + NAD(+) + 4 H(+)(out). Its function is as follows. NDH-1 shuttles electrons from NADH, via FMN and iron-sulfur (Fe-S) centers, to quinones in the respiratory chain. The immediate electron acceptor for the enzyme in this species is believed to be a menaquinone. Couples the redox reaction to proton translocation (for every two electrons transferred, four hydrogen ions are translocated across the cytoplasmic membrane), and thus conserves the redox energy in a proton gradient. This is NADH-quinone oxidoreductase subunit C from Mycolicibacterium gilvum (strain PYR-GCK) (Mycobacterium gilvum (strain PYR-GCK)).